A 298-amino-acid polypeptide reads, in one-letter code: UDP-N-acetylenolpyruvoylglucosamine reductase (298 aa).

One can recognise an FAD-binding PCMH-type domain in the interval 26–191; sequence KTGGEAEYLA…LSATFSLKPG (166 aa). R170 is an active-site residue. S220 serves as the catalytic Proton donor. E290 is an active-site residue.

The protein belongs to the MurB family. Requires FAD as cofactor.

Its subcellular location is the cytoplasm. It catalyses the reaction UDP-N-acetyl-alpha-D-muramate + NADP(+) = UDP-N-acetyl-3-O-(1-carboxyvinyl)-alpha-D-glucosamine + NADPH + H(+). It participates in cell wall biogenesis; peptidoglycan biosynthesis. Its function is as follows. Cell wall formation. The chain is UDP-N-acetylenolpyruvoylglucosamine reductase from Lactobacillus acidophilus (strain ATCC 700396 / NCK56 / N2 / NCFM).